Consider the following 689-residue polypeptide: MKILTKFFLLLVVTTCSLHYYCQIGQCSTQLQRVCHYTTPSVWDELLVEKNEFYREQLNPKVKVLKSHISQINSHYQDKVLPKLVDLGNRFYFDIVSPRIDNVCEFWEEFELKPYRERSLNQIRKVRQRIWFYYSVYLKPNLTKLDNQYALSDKYGKVHNKIAPFVAEIAQNFQNVYHQAAAKVHPHWENLRRTVNAKWEPISSSLWQRCRTNEICFKTNAQLKNIWKNLKLGCDYLSIYVHDALSPYSDGLESNVRATKAKSKSKPRVNASASARGNARAGAKAGAKAGTSEISASATADPTTSASATVTAGFEDDYDDEEPLYTSTSTIMLTVTMSTDQNELSPSQNTANAELGISEQDAIKDEFEAWFKVVDQKSSGVVKTFNKEVNKYLHHRVQQLDSIFQNKTKTVSEVLQNRYKNLNRAIQDINCTCETDTGAGNQTCFDSTGTTQLSEYITRSKMRELFAEAHSTLDQSMLQLKQDLEPIAQEVESRVSLIREEMVEVYEEWGDAMVSEWSKRLAYIDVVAGHLDDNGASTDEESSENWRKFLNLKKQVIKARDELAEHPADLHEIKQFVKKVHYLIEVLAKEAGEYLYILRARANLAFQAREQESKQREDSPRMDRDSTQNVENSNTTTASAEKSGKKAKKVKRVAQNGTNSTEKFSAGPDSSSKEPSMETTVQNNVTLQI.

The first 18 residues, 1 to 18 (MKILTKFFLLLVVTTCSL), serve as a signal peptide directing secretion. The tract at residues 259–308 (TKAKSKSKPRVNASASARGNARAGAKAGAKAGTSEISASATADPTTSASA) is disordered. Residues 270-308 (NASASARGNARAGAKAGAKAGTSEISASATADPTTSASA) show a composition bias toward low complexity. Residues 406–435 (NKTKTVSEVLQNRYKNLNRAIQDINCTCET) adopt a coiled-coil conformation. The segment covering 610 to 626 (EQESKQREDSPRMDRDS) has biased composition (basic and acidic residues). The segment at 610-689 (EQESKQREDS…TVQNNVTLQI (80 aa)) is disordered. Composition is skewed to polar residues over residues 627–637 (TQNVENSNTTT), 655–670 (QNGTNSTEKFSAGPDS), and 677–689 (METTVQNNVTLQI).

This sequence belongs to the SHE10 family. In terms of assembly, component of the mitochondria-localized RNase mitochondrial RNA-processing (RNase MRP) composed of one single RNA encoded by the NME1 gene and at least 31 proteins. Absent in the nucleus-localized RNase MRP (NuMRP).

It is found in the mitochondrion. In terms of biological role, involved in spore wall assembly. May be a component of the mitochondrial RNase MRP (MtMRP), a ribonucleoprotein endoribonuclease involved in the cleaving RNA transcripts to generate primers for DNA replication in mitochondria. The chain is Outer spore wall assembly protein SHE10 from Zygosaccharomyces rouxii (strain ATCC 2623 / CBS 732 / NBRC 1130 / NCYC 568 / NRRL Y-229).